The chain runs to 341 residues: uncharacterized protein (341 aa).

WD repeat units follow at residues 19 to 59 (SLGS…QVHT), 106 to 145 (GHTDIVSSIEVSPIEDQFVSTANDKTLKLWKMNQSSRCLG), 252 to 293 (PFSN…HHKG), and 303 to 341 (VSQSIINPGLVKYNPRYDQLLTAGSQLVFWLPEKYALTS).

The protein resides in the cytoplasm. It is found in the nucleus. This is an uncharacterized protein from Schizosaccharomyces pombe (strain 972 / ATCC 24843) (Fission yeast).